We begin with the raw amino-acid sequence, 206 residues long: Probable N-acetyltransferase 14 (206 aa).

Positions 9-206 (LSVREMREEE…TIVQEFRKDI (198 aa)) constitute an N-acetyltransferase domain. 2 helical membrane-spanning segments follow: residues 37-57 (LILYILTRPMTLLLMAVASSG) and 60-80 (FILNSFSVALVIPVLLTIVGL).

The protein belongs to the camello family.

The protein resides in the membrane. Its function is as follows. Probable acetyltransferase. In Xenopus tropicalis (Western clawed frog), this protein is Probable N-acetyltransferase 14 (nat14).